The primary structure comprises 233 residues: MADS-box protein CMB1 (233 aa).

Residues arginine 3–cysteine 58 enclose the MADS-box domain. The 91-residue stretch at threonine 87–serine 177 folds into the K-box domain.

Its subcellular location is the nucleus. This Dianthus caryophyllus (Carnation) protein is MADS-box protein CMB1 (CMB1).